Here is a 156-residue protein sequence, read N- to C-terminus: Acyl carrier protein, mitochondrial (156 aa).

The N-terminal 68 residues, 1-68 (MAVRVLCACV…GRVTQLCRQY (68 aa)), are a transit peptide targeting the mitochondrion. The 76-residue stretch at 77–152 (EGIKDRVLYV…EIVDYIADKK (76 aa)) folds into the Carrier domain. Lysine 88 is subject to N6-acetyllysine. Residue serine 112 is modified to O-(pantetheine 4'-phosphoryl)serine.

Mammalian complex I is composed of 45 different subunits. Interacts with ETFRF1. Identified in a complex composed of MALSU1, MIEF1 upstream open reading frame protein and NDUFAB1; within the trimeric complex MIEF1 upstream open reading frame protein functions as a bridging scaffold that interacts with MALSU1 on one side, and with NDUFAB1 on the other side. The complex interacts with the mitochondrial large ribosomal subunit. Interacts with alpha-1-microglobulin chain; this interaction is required for the maintenance of mitochondrial redox homeostasis. Component of the mitochondrial core iron-sulfur cluster (ISC) complex composed of NFS1, LYRM4, NDUFAB1, ISCU, FXN, and FDX2; this complex is a heterohexamer containing two copies of each monomer. Component of the cyteine desulfurase complex composed of NFS1, LYRM4 and NDUFAB1; this complex contributes to the stability and cysteine desulfurase activity of NFS1. Phosphopantetheinylation at Ser-112 is essential for interactions with LYR motif-containing proteins.

The protein localises to the mitochondrion. Functionally, carrier of the growing fatty acid chain in fatty acid biosynthesis. Accessory and non-catalytic subunit of the mitochondrial membrane respiratory chain NADH dehydrogenase (Complex I), which functions in the transfer of electrons from NADH to the respiratory chain. Accessory protein, of the core iron-sulfur cluster (ISC) assembly complex, that regulates, in association with LYRM4, the stability and the cysteine desulfurase activity of NFS1 and participates in the [2Fe-2S] clusters assembly on the scaffolding protein ISCU. The core iron-sulfur cluster (ISC) assembly complex is involved in the de novo synthesis of a [2Fe-2S] cluster, the first step of the mitochondrial iron-sulfur protein biogenesis. This process is initiated by the cysteine desulfurase complex (NFS1:LYRM4:NDUFAB1) that produces persulfide which is delivered on the scaffold protein ISCU in a FXN-dependent manner. Then this complex is stabilized by FDX2 which provides reducing equivalents to accomplish the [2Fe-2S] cluster assembly. Finally, the [2Fe-2S] cluster is transferred from ISCU to chaperone proteins, including HSCB, HSPA9 and GLRX5. The polypeptide is Acyl carrier protein, mitochondrial (Bos taurus (Bovine)).